A 503-amino-acid polypeptide reads, in one-letter code: Probable cytosol aminopeptidase (503 aa).

Mn(2+) contacts are provided by lysine 270 and aspartate 275. Lysine 282 is an active-site residue. Positions 293, 352, and 354 each coordinate Mn(2+). Arginine 356 is a catalytic residue.

It belongs to the peptidase M17 family. It depends on Mn(2+) as a cofactor.

Its subcellular location is the cytoplasm. It catalyses the reaction Release of an N-terminal amino acid, Xaa-|-Yaa-, in which Xaa is preferably Leu, but may be other amino acids including Pro although not Arg or Lys, and Yaa may be Pro. Amino acid amides and methyl esters are also readily hydrolyzed, but rates on arylamides are exceedingly low.. The enzyme catalyses Release of an N-terminal amino acid, preferentially leucine, but not glutamic or aspartic acids.. In terms of biological role, presumably involved in the processing and regular turnover of intracellular proteins. Catalyzes the removal of unsubstituted N-terminal amino acids from various peptides. The chain is Probable cytosol aminopeptidase from Escherichia fergusonii (strain ATCC 35469 / DSM 13698 / CCUG 18766 / IAM 14443 / JCM 21226 / LMG 7866 / NBRC 102419 / NCTC 12128 / CDC 0568-73).